The sequence spans 551 residues: DNA ligase (551 aa).

An ATP-binding site is contributed by E246. K248 serves as the catalytic N6-AMP-lysine intermediate. R253, R268, E298, F337, R414, and K420 together coordinate ATP.

This sequence belongs to the ATP-dependent DNA ligase family. Mg(2+) serves as cofactor.

The enzyme catalyses ATP + (deoxyribonucleotide)n-3'-hydroxyl + 5'-phospho-(deoxyribonucleotide)m = (deoxyribonucleotide)n+m + AMP + diphosphate.. DNA ligase that seals nicks in double-stranded DNA during DNA replication, DNA recombination and DNA repair. The chain is DNA ligase from Methanobrevibacter smithii (strain ATCC 35061 / DSM 861 / OCM 144 / PS).